The sequence spans 373 residues: Cobalt-precorrin-5B C(1)-methyltransferase (373 aa).

It belongs to the CbiD family.

The enzyme catalyses Co-precorrin-5B + S-adenosyl-L-methionine = Co-precorrin-6A + S-adenosyl-L-homocysteine. It functions in the pathway cofactor biosynthesis; adenosylcobalamin biosynthesis; cob(II)yrinate a,c-diamide from sirohydrochlorin (anaerobic route): step 6/10. Functionally, catalyzes the methylation of C-1 in cobalt-precorrin-5B to form cobalt-precorrin-6A. This chain is Cobalt-precorrin-5B C(1)-methyltransferase, found in Listeria welshimeri serovar 6b (strain ATCC 35897 / DSM 20650 / CCUG 15529 / CIP 8149 / NCTC 11857 / SLCC 5334 / V8).